A 340-amino-acid polypeptide reads, in one-letter code: Homeobox protein DBX2 (340 aa).

Positions 185 to 244 (GILRRAVFSEDQRKALEKMFQKQKYISKTDRKKLAINLGLKESQVKIWFQNRRMKWRNSK) form a DNA-binding region, homeobox. Residues 283 to 313 (QQHPSPGWRENSPEPSERLIQGSPGAEALPP) are disordered.

It belongs to the H2.0 homeobox family.

It is found in the nucleus. This is Homeobox protein DBX2 (DBX2) from Bos taurus (Bovine).